The following is a 71-amino-acid chain: Large ribosomal subunit protein uL29 (71 aa).

It belongs to the universal ribosomal protein uL29 family.

This is Large ribosomal subunit protein uL29 from Rickettsia canadensis (strain McKiel).